The primary structure comprises 142 residues: Baculoviral IAP repeat-containing protein 5 (142 aa).

A BIR repeat occupies 18-88 (RISTFKNWPF…KHSSGCAFLS (71 aa)). Ser-20 is modified (phosphoserine; by AURKC). An N6-acetyllysine modification is found at Lys-23. Thr-34 is subject to Phosphothreonine; by CDK1 and CDK15. The residue at position 48 (Thr-48) is a Phosphothreonine. Zn(2+) is bound by residues Cys-57, Cys-60, His-77, and Cys-84. Residues Lys-90, Lys-110, Lys-112, and Lys-115 each carry the N6-acetyllysine modification. Position 117 is a phosphothreonine; by AURKB (Thr-117). Lys-129 carries the post-translational modification N6-acetyllysine.

The protein belongs to the IAP family. Monomer or homodimer. Exists as a homodimer in the apo state and as a monomer in the CPC-bound state. The monomer protects cells against apoptosis more efficiently than the dimer. Only the dimeric form is capable of enhancing tubulin stability in cells. When phosphorylated, interacts with LAMTOR5/HBXIP; the resulting complex binds pro-CASP9, as well as active CASP9, but much less efficiently. Component of the chromosomal passenger complex (CPC) composed of at least BIRC5/survivin, CDCA8/borealin, INCENP, AURKB or AURKC; in the complex forms a triple-helix bundle-based subcomplex with INCENP and CDCA8. Interacts with JTB. Interacts (via BIR domain) with histone H3 phosphorylated at 'Thr-3' (H3pT3). Interacts with EVI5. Interacts with GTP-bound RAN in both the S and M phases of the cell cycle. Interacts with USP9X. Interacts with tubulin. Interacts with BIRC2/c-IAP1. The acetylated form at Lys-129 interacts with STAT3. The monomeric form deacetylated at Lys-129 interacts with XPO1/CRM1. The monomeric form interacts with XIAP/BIRC4. Both the dimeric and monomeric form can interact with DIABLO/SMAC. Interacts with BIRC6/bruce. Interacts with FBXL7; this interaction facilitates the polyubiquitination and subsequent proteasomal degradation of BIRC5 by the SCF(FBXL7) E3 ubiquitin-protein ligase complex. In terms of processing, ubiquitinated by the Cul9-RING ubiquitin-protein ligase complex, leading to its degradation. Ubiquitination is required for centrosomal targeting. Deubiquitinated by USP35 or USP38; leading to stabilization. Post-translationally, acetylation at Lys-129 results in its homodimerization, while deacetylation promotes the formation of monomers which heterodimerize with XPO1/CRM1 which facilitates its nuclear export. The acetylated form represses STAT3 transactivation. The dynamic equilibrium between its acetylation and deacetylation at Lys-129 determines its interaction with XPO1/CRM1, its subsequent subcellular localization, and its ability to inhibit STAT3 transactivation. In vitro phosphorylation at Thr-117 by AURKB prevents interaction with INCENP and localization to mitotic chromosomes. Phosphorylation at Thr-48 by CK2 is critical for its mitotic and anti-apoptotic activities. Phosphorylation at Thr-34 by CDK15 is critical for its anti-apoptotic activity. Phosphorylation at Ser-20 by AURKC is critical for regulation of proper chromosome alignment and segregation, and possibly cytokinesis.

The protein localises to the cytoplasm. The protein resides in the nucleus. It localises to the chromosome. It is found in the centromere. Its subcellular location is the cytoskeleton. The protein localises to the spindle. The protein resides in the kinetochore. It localises to the midbody. Its function is as follows. Multitasking protein that has dual roles in promoting cell proliferation and preventing apoptosis. Component of a chromosome passage protein complex (CPC) which is essential for chromosome alignment and segregation during mitosis and cytokinesis. Acts as an important regulator of the localization of this complex; directs CPC movement to different locations from the inner centromere during prometaphase to midbody during cytokinesis and participates in the organization of the center spindle by associating with polymerized microtubules. Involved in the recruitment of CPC to centromeres during early mitosis via association with histone H3 phosphorylated at 'Thr-3' (H3pT3) during mitosis. The complex with RAN plays a role in mitotic spindle formation by serving as a physical scaffold to help deliver the RAN effector molecule TPX2 to microtubules. May counteract a default induction of apoptosis in G2/M phase. The acetylated form represses STAT3 transactivation of target gene promoters. May play a role in neoplasia. Inhibitor of CASP3 and CASP7. Essential for the maintenance of mitochondrial integrity and function. This is Baculoviral IAP repeat-containing protein 5 (BIRC5) from Pongo abelii (Sumatran orangutan).